Reading from the N-terminus, the 493-residue chain is Transcript termination protein A18 (493 aa).

Positions 100 to 256 constitute a Helicase ATP-binding domain; the sequence is MIELKRPLYI…NSIINIAKLS (157 aa). 113–120 lines the ATP pocket; that stretch reads LACGFGKT. The DESH box signature appears at 206–209; that stretch reads DESH.

The protein belongs to the helicase family. Poxviruses subfamily. In terms of assembly, interacts with G2. Might be part of a transcription complex composed at least of G2, A18, and H5.

The protein localises to the virion. In terms of biological role, DNA helicase which seems to act as a postreplicative transcription termination factor. Involved in ATP-dependent release of nascent RNA. Forms a stable complex with single-stranded DNA, and to a lesser extent RNA. This chain is Transcript termination protein A18, found in Camelus.